We begin with the raw amino-acid sequence, 514 residues long: Synaptic vesicular amine transporter (514 aa).

Residues 1–20 (MALSELALVRWLQESRRSRK) lie on the Cytoplasmic side of the membrane. A helical transmembrane segment spans residues 21-41 (LILFIVFLALLLDNMLLTVVV). Residues 42-129 (PIIPSYLYSI…EDKDLLNENV (88 aa)) lie on the Lumenal, vesicle side of the membrane. N-linked (GlcNAc...) asparagine glycosylation is found at asparagine 84 and asparagine 91. A disulfide bridge links cysteine 117 with cysteine 324. A helical membrane pass occupies residues 130–150 (QVGLLFASKATVQLITNPFIG). Over 151–159 (LLTNRIGYP) the chain is Cytoplasmic. The helical transmembrane segment at 160–180 (IPIFAGFCIMFVSTIMFAFSS) threads the bilayer. At 181-189 (SYAFLLIAR) the chain is on the lumenal, vesicle side. The chain crosses the membrane as a helical span at residues 190-210 (SLQGIGSSCSSVAGMGMLASV). Residues 211-219 (YTDDEERGN) are Cytoplasmic-facing. Residues 220-242 (VMGIALGGLAMGVLVGPPFGSVL) traverse the membrane as a helical segment. Serotonin contacts are provided by leucine 228 and valine 232. Topologically, residues 243-248 (YEFVGK) are lumenal, vesicle. A helical transmembrane segment spans residues 249–271 (TAPFLVLAALVLLDGAIQLFVLQ). Topologically, residues 272–291 (PSRVQPESQKGTPLTTLLKD) are cytoplasmic. A helical transmembrane segment spans residues 292–311 (PYILIAAGSICFANMGIAML). Positions 305, 308, 312, 334, and 341 each coordinate serotonin. The Lumenal, vesicle portion of the chain corresponds to 312–328 (EPALPIWMMETMCSRKW). A helical transmembrane segment spans residues 329-352 (QLGVAFLPASISYLIGTNIFGILA). At 353–357 (HKMGR) the chain is on the cytoplasmic side. A helical transmembrane segment spans residues 358–378 (WLCALLGMIIVGVSILCIPFA). The Lumenal, vesicle portion of the chain corresponds to 379–389 (KNIYGLIAPNF). The chain crosses the membrane as a helical span at residues 390–410 (GVGFAIGMVDSSMMPIMGYLV). Aspartate 399 lines the serotonin pocket. Residues 411–414 (DLRH) are Cytoplasmic-facing. The chain crosses the membrane as a helical span at residues 415-435 (VSVYGSVYAIADVAFCMGYAI). Tyrosine 433 contributes to the serotonin binding site. At 436–440 (GPSAG) the chain is on the lumenal, vesicle side. A helical membrane pass occupies residues 441 to 462 (GAIAKAIGFPWLMTIIGIIDIL). The Cytoplasmic portion of the chain corresponds to 463–514 (FAPLCFFLRSPPAKEEKMAILMDHNCPIKTKMYTQNNIQSYPIGEDEESESD). Phosphoserine is present on residues serine 511 and serine 513.

Belongs to the major facilitator superfamily. Vesicular transporter family. Interacts with SLC6A3. In terms of tissue distribution, expressed in neuronal and neuroendocrine tissues. Detected in central and peripheral nervous system in particular in axonal and dendritic processes in dopaminergic cells of substantia nigra, histaminergic neuronal cell bodies of substantia nigra and tuberomammillary nucleus, in ganglion cells of sympathetic glia and in peripheral sympathetic nerve terminals in stomach and duodenum (at protein level). Highly expressed in chromaffin cells of the adrenal medulla and histamine-storing enterochromaffin-like cells of oxyntic mucosa (at protein level).

Its subcellular location is the cytoplasmic vesicle. It localises to the secretory vesicle. The protein localises to the synaptic vesicle membrane. The protein resides in the secretory vesicle membrane. It is found in the cell projection. Its subcellular location is the axon. It localises to the dendrite. The catalysed reaction is serotonin(in) + 2 H(+)(out) = serotonin(out) + 2 H(+)(in). It catalyses the reaction dopamine(in) + 2 H(+)(out) = dopamine(out) + 2 H(+)(in). It carries out the reaction histamine(in) + 2 H(+)(out) = histamine(out) + 2 H(+)(in). With respect to regulation, strongly inhibited by reserpine and tetrabenazine. Also inhibited to a lesser extent by ketanserin and fenfluramine. Reserpine and ketanserin inhibit by blocking the substrate-binding pocket. Tetrabenazine traps SLC18A2/VMAT2 in an occluded conformation and its inhibition is specific to SLC18A2/VMAT2 but not SLC18A1/VMAT1. In terms of biological role, electrogenic antiporter that exchanges one cationic monoamine with two intravesicular protons across the membrane of secretory and synaptic vesicles. Uses the electrochemical proton gradient established by the V-type proton-pump ATPase to accumulate high concentrations of monoamines inside the vesicles prior to their release via exocytosis. Transports a variety of catecholamines such as dopamine, adrenaline and noradrenaline, histamine, and indolamines such as serotonin. Regulates the transvesicular monoaminergic gradient that determines the quantal size. Mediates somatodendritic dopamine release in hippocampal neurons, likely as part of a regulated secretory pathway that integrates retrograde synaptic signals. Acts as a primary transporter for striatal dopamine loading ensuring impulse-dependent release of dopamine at the synaptic cleft. Responsible for histamine and serotonin storage and subsequent corelease from mast cell granules. The polypeptide is Synaptic vesicular amine transporter (SLC18A2) (Homo sapiens (Human)).